Reading from the N-terminus, the 425-residue chain is Serine hydroxymethyltransferase 2 (425 aa).

(6S)-5,6,7,8-tetrahydrofolate-binding positions include Leu-121 and 125–127; that span reads GHL. At Lys-230 the chain carries N6-(pyridoxal phosphate)lysine.

This sequence belongs to the SHMT family. In terms of assembly, homodimer. Pyridoxal 5'-phosphate is required as a cofactor.

Its subcellular location is the cytoplasm. The enzyme catalyses (6R)-5,10-methylene-5,6,7,8-tetrahydrofolate + glycine + H2O = (6S)-5,6,7,8-tetrahydrofolate + L-serine. Its pathway is one-carbon metabolism; tetrahydrofolate interconversion. It functions in the pathway amino-acid biosynthesis; glycine biosynthesis; glycine from L-serine: step 1/1. Its function is as follows. Catalyzes the reversible interconversion of serine and glycine with tetrahydrofolate (THF) serving as the one-carbon carrier. This reaction serves as the major source of one-carbon groups required for the biosynthesis of purines, thymidylate, methionine, and other important biomolecules. Also exhibits THF-independent aldolase activity toward beta-hydroxyamino acids, producing glycine and aldehydes, via a retro-aldol mechanism. The chain is Serine hydroxymethyltransferase 2 from Mycobacterium tuberculosis (strain CDC 1551 / Oshkosh).